Consider the following 122-residue polypeptide: Large ribosomal subunit protein uL14 (122 aa).

The protein belongs to the universal ribosomal protein uL14 family. As to quaternary structure, part of the 50S ribosomal subunit. Forms a cluster with proteins L3 and L19. In the 70S ribosome, L14 and L19 interact and together make contacts with the 16S rRNA in bridges B5 and B8.

In terms of biological role, binds to 23S rRNA. Forms part of two intersubunit bridges in the 70S ribosome. This chain is Large ribosomal subunit protein uL14, found in Staphylococcus carnosus (strain TM300).